The primary structure comprises 239 residues: tRNA (guanine-N(1)-)-methyltransferase (239 aa).

S-adenosyl-L-methionine is bound by residues glycine 109 and isoleucine 133 to leucine 138. 2 disordered regions span residues proline 163–proline 187 and glutamine 217–arginine 239. Composition is skewed to basic and acidic residues over residues serine 165–glutamate 180 and glutamine 217–leucine 226.

Belongs to the RNA methyltransferase TrmD family. Homodimer.

Its subcellular location is the cytoplasm. It carries out the reaction guanosine(37) in tRNA + S-adenosyl-L-methionine = N(1)-methylguanosine(37) in tRNA + S-adenosyl-L-homocysteine + H(+). Its function is as follows. Specifically methylates guanosine-37 in various tRNAs. This is tRNA (guanine-N(1)-)-methyltransferase from Mycolicibacterium paratuberculosis (strain ATCC BAA-968 / K-10) (Mycobacterium paratuberculosis).